The primary structure comprises 249 residues: NH(3)-dependent NAD(+) synthetase (249 aa).

Asp34 contacts Mg(2+). Arg110 contributes to the deamido-NAD(+) binding site. An ATP-binding site is contributed by Thr130. Glu135 is a binding site for Mg(2+). Deamido-NAD(+)-binding residues include Lys143 and Asp150. 2 residues coordinate ATP: Lys159 and Ser181. A deamido-NAD(+)-binding site is contributed by 232–233; sequence HK.

This sequence belongs to the NAD synthetase family. As to quaternary structure, homodimer.

It carries out the reaction deamido-NAD(+) + NH4(+) + ATP = AMP + diphosphate + NAD(+) + H(+). It functions in the pathway cofactor biosynthesis; NAD(+) biosynthesis; NAD(+) from deamido-NAD(+) (ammonia route): step 1/1. In terms of biological role, catalyzes the ATP-dependent amidation of deamido-NAD to form NAD. Uses ammonia as a nitrogen source. This Picrophilus torridus (strain ATCC 700027 / DSM 9790 / JCM 10055 / NBRC 100828 / KAW 2/3) protein is NH(3)-dependent NAD(+) synthetase.